Consider the following 493-residue polypeptide: Probable cytosol aminopeptidase (493 aa).

Mn(2+)-binding residues include Lys-256 and Asp-261. Residue Lys-268 is part of the active site. Asp-279, Asp-338, and Glu-340 together coordinate Mn(2+). Arg-342 is an active-site residue.

The protein belongs to the peptidase M17 family. Mn(2+) serves as cofactor.

The protein resides in the cytoplasm. It carries out the reaction Release of an N-terminal amino acid, Xaa-|-Yaa-, in which Xaa is preferably Leu, but may be other amino acids including Pro although not Arg or Lys, and Yaa may be Pro. Amino acid amides and methyl esters are also readily hydrolyzed, but rates on arylamides are exceedingly low.. It catalyses the reaction Release of an N-terminal amino acid, preferentially leucine, but not glutamic or aspartic acids.. Functionally, presumably involved in the processing and regular turnover of intracellular proteins. Catalyzes the removal of unsubstituted N-terminal amino acids from various peptides. The chain is Probable cytosol aminopeptidase from Phytoplasma australiense.